We begin with the raw amino-acid sequence, 576 residues long: Citrinin biosynthesis transcriptional activator ctnR (576 aa).

The disordered stretch occupies residues 1–27 (MLSHEMASTAHRQPSRPTTRQRQRTGR). Residues 29–56 (CEECRRRKLRCDGQQPRCGVCVDSGVTC) constitute a DNA-binding region (zn(2)-C6 fungal-type). Positions 102–148 (STPLTNDHHDGCSVSSASSRSDSNPPPTVSEPDMSLPNTTTSVSSAP) are disordered. Residues 114–124 (SVSSASSRSDS) are compositionally biased toward low complexity. The segment covering 137 to 148 (LPNTTTSVSSAP) has biased composition (polar residues).

The protein localises to the nucleus. Its function is as follows. Transcription factor that regulates the expression of the gene cluster that mediates the biosynthesis of the mycotoxin citrinin, a hepato-nephrotoxic compound to humans due to inhibition of respiration complex III. The polypeptide is Citrinin biosynthesis transcriptional activator ctnR (Monascus purpureus (Red mold)).